The sequence spans 164 residues: UPF0303 protein RHE_CH02903 (164 aa).

Belongs to the UPF0303 family.

The sequence is that of UPF0303 protein RHE_CH02903 from Rhizobium etli (strain ATCC 51251 / DSM 11541 / JCM 21823 / NBRC 15573 / CFN 42).